A 327-amino-acid chain; its full sequence is GTPase Obg (327 aa).

Residues 3–160 (NKFTDFIKIY…FIFVLELKIL (158 aa)) enclose the Obg domain. In terms of domain architecture, OBG-type G spans 161–327 (ADVGLIGLPN…LIYYICNILS (167 aa)). Residues 167–174 (GLPNSGKS), 192–196 (FTTLN), 214–217 (DIPG), 281–284 (SKSD), and 308–310 (SSF) each bind GTP. 2 residues coordinate Mg(2+): Ser-174 and Thr-194.

Belongs to the TRAFAC class OBG-HflX-like GTPase superfamily. OBG GTPase family. In terms of assembly, monomer. It depends on Mg(2+) as a cofactor.

It is found in the cytoplasm. An essential GTPase which binds GTP, GDP and possibly (p)ppGpp with moderate affinity, with high nucleotide exchange rates and a fairly low GTP hydrolysis rate. Plays a role in control of the cell cycle, stress response, ribosome biogenesis and in those bacteria that undergo differentiation, in morphogenesis control. This is GTPase Obg from Karelsulcia muelleri (strain GWSS) (Sulcia muelleri).